The chain runs to 581 residues: Solute carrier family 15 member 3 (581 aa).

The span at 1–14 (MPAPRAREQPRVPG) shows a compositional bias: basic and acidic residues. Residues 1–26 (MPAPRAREQPRVPGERQPLLPRGARG) are disordered. Residues 38–58 (VLLVEMLERAAFFGVTANLVL) form a helical membrane-spanning segment. 2 N-linked (GlcNAc...) asparagine glycosylation sites follow: asparagine 61 and asparagine 66. A run of 3 helical transmembrane segments spans residues 76-96 (ALVF…LADV), 103-123 (AVAL…ATAF), and 155-175 (PYCA…ASSV). Asparagine 178 carries N-linked (GlcNAc...) asparagine glycosylation. A helical membrane pass occupies residues 200–220 (NWFYWSINLGAVLSLLVVAFI). N-linked (GlcNAc...) asparagine glycosylation is present at asparagine 223. 2 helical membrane passes run 232-252 (IPVG…PVFI) and 310-330 (FQVL…WMVY). A glycan (N-linked (GlcNAc...) asparagine) is linked at asparagine 356. The next 2 helical transmembrane spans lie at 369 to 389 (TIPE…LVPL) and 411 to 431 (MALG…LEME). The N-linked (GlcNAc...) asparagine glycan is linked to asparagine 439. Transmembrane regions (helical) follow at residues 458-478 (IWWQ…ASIP), 497-517 (GIFF…VALL), and 540-560 (LYFF…VWIA).

Belongs to the major facilitator superfamily. Proton-dependent oligopeptide transporter (POT/PTR) (TC 2.A.17) family.

Its subcellular location is the lysosome membrane. The protein resides in the endosome membrane. The catalysed reaction is glycylglycylglycine(out) + n H(+)(out) = glycylglycylglycine(in) + n H(+)(in). It catalyses the reaction carnosine(out) + n H(+)(out) = carnosine(in) + n H(+)(in). It carries out the reaction L-histidine(out) + n H(+)(out) = L-histidine(in) + n H(+)(in). The enzyme catalyses N-acetyl-D-muramoyl-L-alanyl-D-isoglutamine(out) + n H(+)(out) = N-acetyl-D-muramoyl-L-alanyl-D-isoglutamine(in) + n H(+)(in). Proton-coupled amino-acid transporter that transports free histidine and certain di- and tripeptides, and is involved in innate immune response. Also able to transport carnosine. Involved in the detection of microbial pathogens by toll-like receptors (TLRs) and NOD-like receptors (NLRs), probably by mediating transport of bacterial peptidoglycans across the endolysosomal membrane: catalyzes the transport of certain bacterial peptidoglycans, such as muramyl dipeptide (MDP), the NOD2 ligand. In Homo sapiens (Human), this protein is Solute carrier family 15 member 3.